The sequence spans 229 residues: Predicted GPI-anchored protein 19 (229 aa).

The first 20 residues, 1 to 20 (MFSTTSIVLWFTILLPVTLP), serve as a signal peptide directing secretion. Positions 63–92 (DNEQVLRKSKKKKKTTSTGTPGNENTTDFA) are disordered. Residues 81-92 (GTPGNENTTDFA) show a composition bias toward polar residues. N87, N184, and N189 each carry an N-linked (GlcNAc...) asparagine glycan. G208 is lipidated: GPI-anchor amidated glycine. Residues 209–229 (FGSLIPYNSFYLYILLFCIIF) constitute a propeptide, removed in mature form.

The protein resides in the cell membrane. Functionally, predicted GPI-anchored protein which may have a role during host infection. The polypeptide is Predicted GPI-anchored protein 19 (PGA19) (Candida albicans (strain SC5314 / ATCC MYA-2876) (Yeast)).